Consider the following 729-residue polypeptide: Translation initiation factor IF-2 (729 aa).

The segment at 20–141 (QFAGGGRGPG…TTTVRAPVRP (122 aa)) is disordered. The span at 22-91 (AGGGRGPGNP…PGGGRGGGRG (70 aa)) shows a compositional bias: gly residues. A compositionally biased stretch (basic and acidic residues) spans 92–108 (GDGRRRDESFVENEGGR). Residues 112 to 127 (SGRTTSTATTARTPGG) show a composition bias toward low complexity. The 168-residue stretch at 229–396 (PRPPVVTIMG…IILLVADLNE (168 aa)) folds into the tr-type G domain. Residues 238–245 (GHVDHGKT) are G1. Residue 238–245 (GHVDHGKT) coordinates GTP. The segment at 263-267 (GITQH) is G2. The interval 284–287 (DTPG) is G3. Residues 284-288 (DTPGH) and 338-341 (NKID) each bind GTP. The G4 stretch occupies residues 338 to 341 (NKID). Residues 374-376 (SAK) are G5.

This sequence belongs to the TRAFAC class translation factor GTPase superfamily. Classic translation factor GTPase family. IF-2 subfamily.

The protein resides in the cytoplasm. In terms of biological role, one of the essential components for the initiation of protein synthesis. Protects formylmethionyl-tRNA from spontaneous hydrolysis and promotes its binding to the 30S ribosomal subunits. Also involved in the hydrolysis of GTP during the formation of the 70S ribosomal complex. This chain is Translation initiation factor IF-2, found in Roseiflexus sp. (strain RS-1).